Consider the following 831-residue polypeptide: Protein ADP-ribosyltransferase PARP3 (831 aa).

The disordered stretch occupies residues 1 to 69 (MVHETRSRTL…KKLKAEESDL (69 aa)). Basic and acidic residues-rich tracts occupy residues 15–32 (EEGKAAPKKQKTESKEQE) and 43–66 (KTADNEEHDGEQEPSKNKKLKAEE). Residues 49-199 (EHDGEQEPSK…NKYPKRNLDD (151 aa)) form the PADR1 zinc-binding domain. Residues 124–168 (GPLDKCPVCGGQLECKGLKYNCTGTHSEWACCSFSTNNPSRRGGP) form a zinc ribbon region. Zn(2+) is bound by residues Cys129, Cys132, Cys145, and Cys155. A BRCT domain is found at 200–290 (EGIFSGMMIA…EKQPLAAYDI (91 aa)). The WGR domain occupies 338–439 (GGHIYEKDGI…KKFKKKCMKM (102 aa)). In terms of domain architecture, PARP alpha-helical spans 466-585 (HCKLDPSVTF…DINVASRLIG (120 aa)). A PARP catalytic domain is found at 594-827 (DPLSQCYKKL…VKYEEQNMEV (234 aa)).

This sequence belongs to the ARTD/PARP family.

Its subcellular location is the nucleus. It carries out the reaction L-aspartyl-[protein] + NAD(+) = 4-O-(ADP-D-ribosyl)-L-aspartyl-[protein] + nicotinamide. The catalysed reaction is L-glutamyl-[protein] + NAD(+) = 5-O-(ADP-D-ribosyl)-L-glutamyl-[protein] + nicotinamide. Functionally, involved in the base excision repair (BER) pathway, by catalyzing the poly(ADP-ribosyl)ation of a limited number of acceptor proteins involved in chromatin architecture and in DNA metabolism. This modification follows DNA damages and appears as an obligatory step in a detection/signaling pathway leading to the reparation of DNA strand breaks. This Oryza sativa subsp. japonica (Rice) protein is Protein ADP-ribosyltransferase PARP3 (PARP3).